A 149-amino-acid chain; its full sequence is Probable flagellum biosynthesis repressor protein FlbT (149 aa).

It belongs to the FlbT family.

Has a post-transcriptional repressor function in flagellum biogenesis. Associates with the 5'-UTR of fljK mRNA and promotes its degradation. This Allorhizobium ampelinum (strain ATCC BAA-846 / DSM 112012 / S4) (Agrobacterium vitis (strain S4)) protein is Probable flagellum biosynthesis repressor protein FlbT.